A 239-amino-acid chain; its full sequence is Fatty acid metabolism regulator protein (239 aa).

An HTH gntR-type domain is found at 6–74; the sequence is QSPAGFAEEY…HGKPTKVNNF (69 aa). Positions 34–53 form a DNA-binding region, H-T-H motif; that stretch reads ERELSELIGVTRTTLREVLQ.

Homodimer.

The protein localises to the cytoplasm. Multifunctional regulator of fatty acid metabolism. This chain is Fatty acid metabolism regulator protein, found in Klebsiella pneumoniae (strain 342).